The chain runs to 65 residues: Subtilisin inhibitor CLSI-I (65 aa).

The protein belongs to the protease inhibitor I13 (potato type I serine protease inhibitor) family.

Its function is as follows. Inhibits subtilisin-type microbial serine proteases including proteinase K, subtilisin BPN', subtilisin Carlsberg, subtilisin E, A.oryzae protease and S.griseus alkaline protease. Weakly inhibits pronase E. Does not inhibit trypsin or chymotrypsin. This Canavalia lineata (Beach bean) protein is Subtilisin inhibitor CLSI-I.